The sequence spans 1357 residues: DNA-directed RNA polymerase subunit beta (1357 aa).

The protein belongs to the RNA polymerase beta chain family. In terms of assembly, the RNAP catalytic core consists of 2 alpha, 1 beta, 1 beta' and 1 omega subunit. When a sigma factor is associated with the core the holoenzyme is formed, which can initiate transcription.

The enzyme catalyses RNA(n) + a ribonucleoside 5'-triphosphate = RNA(n+1) + diphosphate. In terms of biological role, DNA-dependent RNA polymerase catalyzes the transcription of DNA into RNA using the four ribonucleoside triphosphates as substrates. This chain is DNA-directed RNA polymerase subunit beta, found in Pseudomonas aeruginosa (strain ATCC 15692 / DSM 22644 / CIP 104116 / JCM 14847 / LMG 12228 / 1C / PRS 101 / PAO1).